A 264-amino-acid chain; its full sequence is Thymidylate synthase (264 aa).

Residue Arg21 participates in dUMP binding. His51 lines the (6R)-5,10-methylene-5,6,7,8-tetrahydrofolate pocket. Residue 126 to 127 coordinates dUMP; the sequence is RR. The active-site Nucleophile is Cys146. DUMP is bound by residues 166-169, Asn177, and 207-209; these read RSAD and HIY. Asp169 contacts (6R)-5,10-methylene-5,6,7,8-tetrahydrofolate. Position 263 (Ala263) interacts with (6R)-5,10-methylene-5,6,7,8-tetrahydrofolate.

It belongs to the thymidylate synthase family. Bacterial-type ThyA subfamily. In terms of assembly, homodimer.

It localises to the cytoplasm. The catalysed reaction is dUMP + (6R)-5,10-methylene-5,6,7,8-tetrahydrofolate = 7,8-dihydrofolate + dTMP. Its pathway is pyrimidine metabolism; dTTP biosynthesis. Catalyzes the reductive methylation of 2'-deoxyuridine-5'-monophosphate (dUMP) to 2'-deoxythymidine-5'-monophosphate (dTMP) while utilizing 5,10-methylenetetrahydrofolate (mTHF) as the methyl donor and reductant in the reaction, yielding dihydrofolate (DHF) as a by-product. This enzymatic reaction provides an intracellular de novo source of dTMP, an essential precursor for DNA biosynthesis. The polypeptide is Thymidylate synthase (Porphyromonas gingivalis (strain ATCC BAA-308 / W83)).